Reading from the N-terminus, the 645-residue chain is MKNMSCKLVVSVTLFFSFLTIGPLAHAQNSSEKEVIVVYKNKAGKETILDSDADVEQQYKHLPAVAVTADQETVKELKQDPDILYVENNVSFTAADSTDFKVLSDGTDTSDNFEQWNLEPIQVKQAWKAGLTGKNIKIAVIDSGISPHDDLSIAGGYSAVSYTSSYKDDNGHGTHVAGIIGAKHNGYGIDGIAPEAQIYAVKALDQNGSGDLQSLLQGIDWSIANRMDIVNMSLGTTSDSKILHDAVNKAYEQGVLLVAASGNDGNGKPVNYPAAYSSVVAVSATNEKNQLASFSTTGDEVEFSAPGTNITSTYLNQYYATGSGTSQATPHAAAMFALLKQRDPAETNVQLREEMRKNIVDLGTAGRDQQFGYGLIQYKAQATDSAYAAAEQAVKKAEQTKAQIDINKARELISQLPNSDAKTALHKRLDKVQSYRNVKDAKDKVAKAEKYKTQQTVDTAQTAINKLPNGTDKKNLQKRLDQVKRYIASKQAKDKVAKAEKSKKKTDVDSAQSAIGKLPASSEKTSLQKRLNKVKSTNLKTAQQSVSAAEKKSTDANAAKAQSAVNQLQAGKDKTALQKRLDKVKKKVAAAEAKKVETAKAKVKKAEKDKTKKSKTSAQSAVNQLKASNEKTKLQKRLNAVKPKK.

The N-terminal stretch at Met-1–Ala-27 is a signal peptide. Residues Gln-28–Leu-103 constitute a propeptide that is removed on maturation. A Peptidase S8 domain is found at Gln-115–Ala-382. Residues Asp-142, His-172, and Ser-326 each act as charge relay system in the active site. Disordered stretches follow at residues Lys-490–Leu-577 and Ala-591–Lys-645. A compositionally biased stretch (basic and acidic residues) spans Gln-491–Val-508. Residues Ser-522–Ser-547 are compositionally biased toward polar residues. The segment covering Glu-592–Lys-610 has biased composition (basic and acidic residues).

This sequence belongs to the peptidase S8 family. In terms of processing, may undergo two steps of processing in its passage through the cell membrane: removal of the N-terminal signal sequence and cleavage of the C-terminal domain. Several active forms of Epr with molecular masses between 40 and 34 kDa were found in the medium of B.subtilis cultures. The size variation of the active forms expressed by the complete epr gene appears to be the result of partial removal of the C-terminus either by processing or degradation.

Its subcellular location is the secreted. It localises to the cell wall. Requires Ca(2+) for stability. Activity is inhibited by phenylmethylsulfonyl fluoride (PMSF) and EDTA. Its function is as follows. Serine protease. Involved in the production of the competence and sporulation stimulating factor CSF. In addition, is essential for swarming motility. Plays a key role in DegU-mediated swarming motility. The protease activity is dispensable for swarming. Not essential for growth or sporulation. This Bacillus subtilis (strain 168) protein is Minor extracellular protease Epr.